Reading from the N-terminus, the 215-residue chain is 16S rRNA (adenine(1408)-N(1))-methyltransferase (215 aa).

S-adenosyl-L-methionine contacts are provided by residues glycine 32, aspartate 55, 87-88 (AE), 102-107 (LMPWGS), and 191-193 (TSW).

Belongs to the methyltransferase superfamily. Kanamycin-apramycin resistance family.

It carries out the reaction adenosine(1408) in 16S rRNA + S-adenosyl-L-methionine = N(1)-methyladenosine(1408) in 16S rRNA + S-adenosyl-L-homocysteine + H(+). Its function is as follows. Specifically methylates the N(1) position of adenine 1408 in 16S rRNA. Confers resistance to various aminoglycosides. The chain is 16S rRNA (adenine(1408)-N(1))-methyltransferase (kamB) from Streptoalloteichus hindustanus.